The sequence spans 1338 residues: Nonribosomal peptide synthetase astA (1338 aa).

Residues 22-52 (IAVVSGDIPSPHPKNEPSQTSTLHIPRDSDL) are disordered. The tract at residues 271-681 (FQARCRQNPS…GRKGAEVKLR (411 aa)) is adenylation. Residues 820–893 (TPVEIIIHDA…SLAEKCSAGG (74 aa)) enclose the Carrier domain. The residue at position 854 (Ser-854) is an O-(pantetheine 4'-phosphoryl)serine. A condensation region spans residues 949–1336 (TFIFRLSGPV…IIRFLDSPDS (388 aa)).

It belongs to the NRP synthetase family.

It carries out the reaction 7beta,14,16-trihydroxyconfertifolin + benzoate + H(+) = dideacetyl astellolide A + H2O. It catalyses the reaction 7beta,14,16-trihydroxyconfertifolin + 4-hydroxybenzoate + H(+) = dideacetyl astellolide B + H2O. It participates in secondary metabolite biosynthesis; terpenoid biosynthesis. Nonribosomal peptide synthetase; part of the gene cluster that mediates the biosynthesis of astellolides, drimane-type sesquiterpene esters that show antimicrobial, anti-inflammatory, and anti-tumor activities. The first step in astellolide biosynthesis is performed by the sesquiterpene cyclase astC that catalyzes the formation of drimanyl pyrophosphate from farnesyl pyrophosphate. Drimanyl pyrophosphate is then dephosphorylated by the sesquiterpene phosphatase astI to produce drimanyl monophosphate which is further dephosphorylated to drim-8-ene-11-ol by atsK. Drim-8-ene-11-ol is converted to confertifolin, probably by the cytochrome P450 monooxygenase astD and/or the dehydrogenase astE. The cytochrome P450 monooxygenases astB, astF and astJ then hydroxylate confertifolin at C6, C14, or C15 to form trihydroxy confertifolin. The nonribosomal peptide synthetase astA catalyzes ester bond formation between trihydroxy contifolin and benzoic acid (BA) or 4-hydroxy benzoic acid (4HBA), leading to the formation of dideacetyl astellolides A and B, respectively. Finally, the O-acetyltransferase astG converts dideacetyl astellolides A and B into deacetyl astellolides A and B. The chain is Nonribosomal peptide synthetase astA from Aspergillus oryzae (strain ATCC 42149 / RIB 40) (Yellow koji mold).